The sequence spans 172 residues: Ribosome maturation factor RimM (172 aa).

The PRC barrel domain maps to 95–168 (DDGEFYYHEI…RVDVEILEGL (74 aa)).

It belongs to the RimM family. Binds ribosomal protein uS19.

It is found in the cytoplasm. Functionally, an accessory protein needed during the final step in the assembly of 30S ribosomal subunit, possibly for assembly of the head region. Essential for efficient processing of 16S rRNA. May be needed both before and after RbfA during the maturation of 16S rRNA. It has affinity for free ribosomal 30S subunits but not for 70S ribosomes. The polypeptide is Ribosome maturation factor RimM (Streptococcus pneumoniae (strain P1031)).